A 130-amino-acid polypeptide reads, in one-letter code: Glycine cleavage system H protein (130 aa).

Residues 24-106 enclose the Lipoyl-binding domain; the sequence is TATVGITDFA…YGDGWMFKVK (83 aa). Lys65 carries the N6-lipoyllysine modification.

This sequence belongs to the GcvH family. In terms of assembly, the glycine cleavage system is composed of four proteins: P, T, L and H. Requires (R)-lipoate as cofactor.

In terms of biological role, the glycine cleavage system catalyzes the degradation of glycine. The H protein shuttles the methylamine group of glycine from the P protein to the T protein. The chain is Glycine cleavage system H protein from Marinobacter nauticus (strain ATCC 700491 / DSM 11845 / VT8) (Marinobacter aquaeolei).